Reading from the N-terminus, the 815-residue chain is Lon protease 1 (815 aa).

The region spanning 14–211 (IAILPLLGTV…KLNEVLTREL (198 aa)) is the Lon N-terminal domain. 370–377 (GPPGVGKT) lines the ATP pocket. Residues 606 to 787 (TDRPGIVTGL…GQVIELALRA (182 aa)) form the Lon proteolytic domain. Residues Ser693 and Lys736 contribute to the active site.

The protein belongs to the peptidase S16 family. Homohexamer. Organized in a ring with a central cavity.

It is found in the cytoplasm. It catalyses the reaction Hydrolysis of proteins in presence of ATP.. In terms of biological role, ATP-dependent serine protease that mediates the selective degradation of mutant and abnormal proteins as well as certain short-lived regulatory proteins. Required for cellular homeostasis and for survival from DNA damage and developmental changes induced by stress. Degrades polypeptides processively to yield small peptide fragments that are 5 to 10 amino acids long. Binds to DNA in a double-stranded, site-specific manner. The sequence is that of Lon protease 1 from Herpetosiphon aurantiacus (strain ATCC 23779 / DSM 785 / 114-95).